We begin with the raw amino-acid sequence, 63 residues long: Cecropin-A (63 aa).

An N-terminal signal peptide occupies residues 1–22 (MNFVRILSFVFALVLALGAVSA). Residues 23–26 (APEP) constitute a propeptide that is removed on maturation. Leu-61 carries the leucine amide modification.

This sequence belongs to the cecropin family. As to expression, highest expression in fat body and hemocytes. Is also expressed in Malpighian tubules and to a much lesser extent in midgut. Not present in silk gland.

It localises to the secreted. Its function is as follows. Cecropins have lytic and antibacterial activity against several Gram-positive and Gram-negative bacteria. This is Cecropin-A (CECA) from Bombyx mori (Silk moth).